A 243-amino-acid chain; its full sequence is Derlin-1.2 (243 aa).

Residues 1 to 20 are Cytoplasmic-facing; it reads MSSPAEYYKSLPPISKAYGT. A helical transmembrane segment spans residues 21–41; the sequence is LCFFTTVLVRLHILNPLFLYL. The Lumenal segment spans residues 42–54; it reads YYPRVFKKFEVWR. A helical membrane pass occupies residues 55–75; it reads IFTSFFFLGPFSINFGIRLLM. The Cytoplasmic portion of the chain corresponds to 76–94; that stretch reads IARYGVMLEKGAFDKRTAD. A helical transmembrane segment spans residues 95–115; that stretch reads FLWMMIFGAISLLVLSVIPQL. Residues 116 to 155 lie on the Lumenal side of the membrane; the sequence is NTYVLGLPMVSMLVYVWSRENPNAQINIYGILQLKAFYLP. A helical transmembrane segment spans residues 156–176; it reads WVMLLLDVIFGSPLMPGLLGI. Over 177-243 the chain is Cytoplasmic; the sequence is MVGHLYYYFA…FRGRSYRLNQ (67 aa).

Belongs to the derlin family. In terms of tissue distribution, expressed in roots and endosperm.

The protein resides in the endoplasmic reticulum membrane. In terms of biological role, may be involved in the degradation process of specific misfolded endoplasmic reticulum (ER) luminal proteins. In Zea mays (Maize), this protein is Derlin-1.2 (DER1.2).